We begin with the raw amino-acid sequence, 220 residues long: Deoxyribose-phosphate aldolase (220 aa).

The active-site Proton donor/acceptor is D89. K151 acts as the Schiff-base intermediate with acetaldehyde in catalysis. Residue K180 is the Proton donor/acceptor of the active site.

It belongs to the DeoC/FbaB aldolase family. DeoC type 1 subfamily.

It is found in the cytoplasm. It catalyses the reaction 2-deoxy-D-ribose 5-phosphate = D-glyceraldehyde 3-phosphate + acetaldehyde. It participates in carbohydrate degradation; 2-deoxy-D-ribose 1-phosphate degradation; D-glyceraldehyde 3-phosphate and acetaldehyde from 2-deoxy-alpha-D-ribose 1-phosphate: step 2/2. In terms of biological role, catalyzes a reversible aldol reaction between acetaldehyde and D-glyceraldehyde 3-phosphate to generate 2-deoxy-D-ribose 5-phosphate. In Streptococcus gordonii (strain Challis / ATCC 35105 / BCRC 15272 / CH1 / DL1 / V288), this protein is Deoxyribose-phosphate aldolase.